The following is a 135-amino-acid chain: Large ribosomal subunit protein uL16c (135 aa).

It belongs to the universal ribosomal protein uL16 family. Part of the 50S ribosomal subunit.

It is found in the plastid. It localises to the chloroplast. The chain is Large ribosomal subunit protein uL16c from Lepidium virginicum (Virginia pepperweed).